A 510-amino-acid chain; its full sequence is Calmodulin-binding receptor-like cytoplasmic kinase 3 (510 aa).

The signal sequence occupies residues 1–30; it reads MGGDDLSFTRLVITALFGLLMLLQIKETSA. The span at 166 to 178 shows a compositional bias: polar residues; it reads VSSFEMSPSSEKI. Positions 166–209 are disordered; that stretch reads VSSFEMSPSSEKIPQSPFRAPPSPSRVPQSPSRYAMSPRPSRLG. The residue at position 214 (Thr-214) is a Phosphothreonine. A Protein kinase domain is found at 225–499; sequence FADSHQIGEG…MEAVGKQLWA (275 aa). ATP is bound by residues 231-239 and Lys-253; that span reads IGEGGFGVV. Residues 240 to 265 are caM-binding; sequence FKGVLDDGQVVAIKRAKKEHFENLRT. The Proton acceptor role is filled by Asp-350. Ser-354 carries the phosphoserine modification. 2 positions are modified to phosphothreonine: Thr-386 and Thr-391. The residue at position 399 (Tyr-399) is a Phosphotyrosine.

Belongs to the protein kinase superfamily. Ser/Thr protein kinase family. Interacts with calmodulin (CaM) in a Ca(2+)-dependent manner.

The protein resides in the cytoplasm. The enzyme catalyses L-seryl-[protein] + ATP = O-phospho-L-seryl-[protein] + ADP + H(+). It catalyses the reaction L-threonyl-[protein] + ATP = O-phospho-L-threonyl-[protein] + ADP + H(+). This is Calmodulin-binding receptor-like cytoplasmic kinase 3 (CRCK3) from Arabidopsis thaliana (Mouse-ear cress).